We begin with the raw amino-acid sequence, 370 residues long: Popeye domain-containing 2 (370 aa).

2 consecutive transmembrane segments (helical) span residues 51 to 71 and 78 to 98; these read ALYI…WGWL and VFIW…HLIF. Residues 275–349 form a disordered region; it reads PSPPGSEGGS…SGEDSTSLIL (75 aa). Residues 283–294 show a composition bias toward low complexity; it reads GSASSPPRGSLG. Polar residues-rich tracts occupy residues 307 to 319 and 330 to 347; these read NPGS…QPDQ and QHWS…STSL.

It belongs to the popeye family. Expressed in the heart and, slightly, in skeletal muscle.

It localises to the membrane. It is found in the cell membrane. Its subcellular location is the sarcolemma. Functionally, important for striated muscle differentiation and cardiac morphogenesis. Is also required for cardiac conduction system development, plays a regulatory function in heart rate dynamics mediated, at least in part, through cAMP-binding. The polypeptide is Popeye domain-containing 2 (Danio rerio (Zebrafish)).